The chain runs to 301 residues: Protein RESTRICTED TEV MOVEMENT 3 (301 aa).

An MATH domain is found at 6–134; that stretch reads DKKITWTIKN…NGELKIVVEI (129 aa). Residues 235–289 adopt a coiled-coil conformation; the sequence is KLDWLEKKLYEVSEKKENEEASETGLQEMEEELKDMKQKCLEMEALVEKEKAKVS.

Self-interacts. Interacts with RTM1.

Required for the restriction of long-distance movement of the pathogenic tobacco etch virus (TEV) without causing a hypersensitive response or inducing systemic acquired resistance. This chain is Protein RESTRICTED TEV MOVEMENT 3 (RTM3), found in Arabidopsis thaliana (Mouse-ear cress).